We begin with the raw amino-acid sequence, 79 residues long: Acyl carrier protein (79 aa).

Positions 2-77 (SDIEARVKKI…LAIDYAKSHA (76 aa)) constitute a Carrier domain. Ser37 carries the post-translational modification O-(pantetheine 4'-phosphoryl)serine.

Belongs to the acyl carrier protein (ACP) family. In terms of processing, 4'-phosphopantetheine is transferred from CoA to a specific serine of apo-ACP by AcpS. This modification is essential for activity because fatty acids are bound in thioester linkage to the sulfhydryl of the prosthetic group.

The protein localises to the cytoplasm. Its pathway is lipid metabolism; fatty acid biosynthesis. Carrier of the growing fatty acid chain in fatty acid biosynthesis. The chain is Acyl carrier protein from Methylibium petroleiphilum (strain ATCC BAA-1232 / LMG 22953 / PM1).